The sequence spans 89 residues: Long neurotoxin homolog NTL2 (89 aa).

The signal sequence occupies residues 1 to 21; the sequence is MKTLLLSLVVVIIVCLDLGYT. 5 disulfide bridges follow: Cys24/Cys45, Cys27/Cys32, Cys38/Cys66, Cys70/Cys81, and Cys82/Cys87. Positions 54 to 56 match the Cell attachment site motif; it reads RGD.

The protein belongs to the three-finger toxin family. Ancestral subfamily. Orphan group V sub-subfamily. Expressed by the venom gland.

The protein localises to the secreted. Its function is as follows. Exhibits M2 muscarinic acetylcholine receptor (CHRM2)-blocking activity, but has a weak binding activity toward nicotinic AChR. Moreover, it inhibits collagen-induced platelet aggregation. This chain is Long neurotoxin homolog NTL2, found in Bungarus multicinctus (Many-banded krait).